Consider the following 322-residue polypeptide: Gluconeogenesis factor (322 aa).

The protein belongs to the gluconeogenesis factor family.

The protein resides in the cytoplasm. Its function is as follows. Required for morphogenesis under gluconeogenic growth conditions. The polypeptide is Gluconeogenesis factor (Listeria monocytogenes serovar 1/2a (strain ATCC BAA-679 / EGD-e)).